We begin with the raw amino-acid sequence, 443 residues long: ATP-dependent protease ATPase subunit HslU (443 aa).

ATP is bound by residues Ile-20, 62 to 67, Asp-255, Glu-321, and Arg-393; that span reads GVGKTE.

This sequence belongs to the ClpX chaperone family. HslU subfamily. A double ring-shaped homohexamer of HslV is capped on each side by a ring-shaped HslU homohexamer. The assembly of the HslU/HslV complex is dependent on binding of ATP.

Its subcellular location is the cytoplasm. ATPase subunit of a proteasome-like degradation complex; this subunit has chaperone activity. The binding of ATP and its subsequent hydrolysis by HslU are essential for unfolding of protein substrates subsequently hydrolyzed by HslV. HslU recognizes the N-terminal part of its protein substrates and unfolds these before they are guided to HslV for hydrolysis. The sequence is that of ATP-dependent protease ATPase subunit HslU from Helicobacter pylori (strain HPAG1).